The primary structure comprises 321 residues: Basic peroxidase (321 aa).

The N-terminal stretch at 1–30 (MSYHKSSGTTLMVPLFMLLISVNYFMSCNA) is a signal peptide. Residue glutamine 31 is modified to Pyrrolidone carboxylic acid. 4 cysteine pairs are disulfide-bonded: cysteine 41-cysteine 117, cysteine 74-cysteine 79, cysteine 123-cysteine 317, and cysteine 202-cysteine 228. The Proton acceptor role is filled by histidine 72. Ca(2+)-binding residues include aspartate 73, valine 76, glycine 78, aspartate 80, and serine 82. Proline 165 contributes to the substrate binding site. Histidine 195 is a heme b binding site. A Ca(2+)-binding site is contributed by threonine 196. Asparagine 211 and asparagine 221 each carry an N-linked (GlcNAc...) asparagine glycan. Aspartate 241, threonine 244, and aspartate 249 together coordinate Ca(2+).

The protein belongs to the peroxidase family. Classical plant (class III) peroxidase subfamily. The cofactor is heme b. Ca(2+) is required as a cofactor. Post-translationally, N-glycosylated. Expressed in tracheary elements, roots, young and old hypocotyls, and stems in the partially glycosylated form and in roots and young hypocotyls in the fully glycosylated form. None of the isoforms is significantly expressed in leaves or cotyledons.

Its subcellular location is the secreted. The enzyme catalyses 2 a phenolic donor + H2O2 = 2 a phenolic radical donor + 2 H2O. In terms of biological role, removal of H(2)O(2), oxidation of toxic reductants, biosynthesis and degradation of lignin, suberization, auxin catabolism, response to environmental stresses such as wounding, pathogen attack and oxidative stress. These functions might be dependent on each isozyme/isoform in each plant tissue. Involved in the synthesis of highly polymerized lignins. The chain is Basic peroxidase (POD3) from Zinnia elegans (Garden zinnia).